Consider the following 324-residue polypeptide: NADH-dependent D-xylose reductase (324 aa).

Catalysis depends on Y54, which acts as the Proton donor. Position 116 (H116) interacts with substrate. Residue 220–286 coordinates NAD(+); that stretch reads SSFGPQSFLE…SNSPDRMAQN (67 aa).

This sequence belongs to the aldo/keto reductase family.

The catalysed reaction is xylitol + NAD(+) = D-xylose + NADH + H(+). The enzyme catalyses xylitol + NADP(+) = D-xylose + NADPH + H(+). Its pathway is carbohydrate metabolism; D-xylose degradation. Its function is as follows. Reduces D-xylose into xylitol. Preferentially utilizes NADH as a cosubstrate. This is NADH-dependent D-xylose reductase (XYL1) from Candida parapsilosis (Yeast).